The primary structure comprises 196 residues: MEGIRRAAQRAAEEFLQAFPMAPGSLFVLGGSTSEVLGERVGTRPSLEAAHAVLEGLLPPLLERGVHVAVQACEHLNRALVVERETARAFGLEEVAVFPHPKAGGALATAAFLRFRDPVMVESLKAQAHGGMDIGGVLIGMHLRPVAVPLRLSVRKIGEAVLLAAKTRPKLVGGARAVYTREEMLKKLEEFLPKPP.

It belongs to the UPF0340 family.

This Thermus thermophilus (strain ATCC 27634 / DSM 579 / HB8) protein is UPF0340 protein TTHA0583.